The sequence spans 185 residues: Putative gustatory receptor clone PTE01 (185 aa).

The helical transmembrane segment at 1–11 threads the bilayer; that stretch reads MYLFLSNLSLA. Over 12-42 the chain is Extracellular; that stretch reads DISFTSTTLPKMIVDIQTNNRAISYSGCLTQ. A helical membrane pass occupies residues 43-62; that stretch reads MSFFMLFGCLDSLLLTAMAY. At 63-84 the chain is on the cytoplasmic side; it reads DRFVAICHPLHYQVIMNPRLCG. A helical membrane pass occupies residues 85 to 105; the sequence is LLVFLSILISLLVSQLHNSVV. Residues 106 to 138 are Extracellular-facing; sequence LQLTYFKSVDISHFFCDPSLLLNLACSDTFTNN. A helical transmembrane segment spans residues 139-160; the sequence is IVMYFVGAISGFLPISGIFFSY. The Cytoplasmic portion of the chain corresponds to 161-182; that stretch reads YKIVSSILRMPSPGGKYKAFST. A helical membrane pass occupies residues 183-185; sequence CGS.

The protein belongs to the G-protein coupled receptor 1 family. In terms of tissue distribution, tongue specific.

The protein resides in the cell membrane. Its function is as follows. Possible taste receptor. The polypeptide is Putative gustatory receptor clone PTE01 (Rattus norvegicus (Rat)).